A 633-amino-acid polypeptide reads, in one-letter code: MHGLLLAGLLALPMNVLAHPAEQHASNVLSRRGVDIESFRLPLKAKYMDSDATAQKIQAMSFSKDDDYVSTATKLVKSTFPKSTFRVVDDHYIGTNGIGHVHFKQTAHGLDIDNSDFNVNIGRDGKVFSFGNSFFTGEIPKENPMVKRAFSDPVKALKGAVKALNLPVKSDNAKAKTAAGKEAFEFMGTTGALSAPKANLVYLQKEDGSLALTWKVETDVGDNWLLTYVDAHNSETVHNVVDYVASAEYKVFAWGLNDPTEGNPTSIRDPWTDASPYTWNSDGMTKYPTTRGNNAIAQDNPTGGSTYINNYRPQSPNLIFSYPWSPTATPPSSYKDFSITQLFYTTNRYHDLLYSFGFNEAAGNFQVNNGNKGGRGNDFAIVNAQDGSGTNNANFATPPDGSPGRMRMYNWTTARPNRDGCLEAGIVIHEYTHGLSNRLCGGPANSACLNALESGGMGEGWGDFYATAIRLKPRDTKDTNYSMGAWAANNPKGIRAYLYSTNLQTNPYMYTSVNSLREVHQIGTVWASMLYDLMWALIEAHGGTYSADPVFRNGVPQDGRHLSMKLVMDGMALQPCNPNFVQARDAILDADRALTNSANKCTIWKAFAKRGLGYGAKYDARNRTGSNKLPPGC.

Positions 1–18 (MHGLLLAGLLALPMNVLA) are cleaved as a signal peptide. Residues 19–246 (HPAEQHASNV…VHNVVDYVAS (228 aa)) constitute a propeptide that is removed on maturation. Residue asparagine 410 is glycosylated (N-linked (GlcNAc...) asparagine). Zn(2+) is bound at residue histidine 429. Residue glutamate 430 is part of the active site. Histidine 433 is a binding site for Zn(2+). Residues asparagine 480 and asparagine 622 are each glycosylated (N-linked (GlcNAc...) asparagine).

The protein belongs to the peptidase M36 family. The cofactor is Zn(2+).

The protein resides in the secreted. Functionally, secreted metalloproteinase probably acting as a virulence factor. The chain is Probable extracellular metalloproteinase 3 (MEP3) from Trichophyton verrucosum (strain HKI 0517).